The chain runs to 683 residues: Patellin-2 (683 aa).

The interval 1–23 (MAQEEIQKPTASVPVVKEETPAP) is disordered. Residue Ala-2 is modified to N-acetylalanine. A Phosphoserine modification is found at Ser-79. A coiled-coil region spans residues 86–163 (LASELQEAEK…ETKEEEKSAA (78 aa)). The interval 111–279 (KREFTAPPPP…KKEEKATAST (169 aa)) is disordered. The segment covering 124–161 (VKEEKVEEKKTEETEEKKEEVKTEEKSLEAETKEEEKS) has biased composition (basic and acidic residues). A compositionally biased stretch (low complexity) spans 232 to 243 (PVETTPAAPVTT). Over residues 244–275 (ETKEEEKAAPVTTETKEEEKAAPGETKKEEKA) the composition is skewed to basic and acidic residues. A Glycyl lysine isopeptide (Lys-Gly) (interchain with G-Cter in ubiquitin) cross-link involves residue Lys-394. A CRAL-TRIO domain is found at 404 to 576 (EDLEGSEFEK…KYGGLSKDSP (173 aa)). Residues 580–681 (EDGVTEAVVK…KKKVLYRSKT (102 aa)) form the GOLD domain.

Belongs to the patellin family. Interacts with the deubiquitinating enzyme AMSH3.

It is found in the membrane. It localises to the cytoplasm. In terms of biological role, carrier protein that may be involved in membrane-trafficking events associated with cell plate formation during cytokinesis. Binds to some hydrophobic molecules such as phosphoinositides and promotes their transfer between the different cellular sites. In Arabidopsis thaliana (Mouse-ear cress), this protein is Patellin-2 (PATL2).